Reading from the N-terminus, the 722-residue chain is Solute carrier organic anion transporter family member 4A1 (722 aa).

The interval 1–52 is disordered; that stretch reads MPLHQLGDKPLTFPSPNSAMENGLDHTPPSRRASPGTPLSPGSLRSAAHSPL. Over 1 to 103 the chain is Cytoplasmic; it reads MPLHQLGDKP…PCLQVLNTPK (103 aa). The residue at position 34 (serine 34) is a Phosphoserine. Threonine 37 bears the Phosphothreonine mark. Phosphoserine occurs at positions 40, 43, 46, and 50. A helical transmembrane segment spans residues 104–124; sequence GILFFLCAAAFLQGMTVNGFI. Topologically, residues 125–143 are extracellular; the sequence is NTVITSLERRYDLHSYQSG. The chain crosses the membrane as a helical span at residues 144-164; sequence LIASSYDIAACLCLTFVSYFG. The Cytoplasmic portion of the chain corresponds to 165 to 170; the sequence is GSGHKP. The helical transmembrane segment at 171-195 threads the bilayer; sequence RWLGWGVLLMGTGSLVFALPHFTAG. At 196 to 222 the chain is on the extracellular side; sequence RYEVELDAGVRTCPANPGAVCADSTSG. Residues 223–253 form a helical membrane-spanning segment; the sequence is LSRYQLVFMLGQFLHGVGATPLYTLGVTYLD. Topologically, residues 254–272 are cytoplasmic; that stretch reads ENVKSSCSPVYIAIFYTAA. The chain crosses the membrane as a helical span at residues 273-293; the sequence is ILGPAAGYLIGGALLNIYTEM. The Extracellular segment spans residues 294 to 307; it reads GRRTELTTESPLWV. The helical transmembrane segment at 308–332 threads the bilayer; that stretch reads GAWWVGFLGSGAAAFFTAVPILGYP. The Cytoplasmic portion of the chain corresponds to 333–378; the sequence is RQLPGSQRYAVMRAAEMHQLKDSSRGEASNPDFGKTIRDLPLSIWL. The helical transmembrane segment at 379–400 threads the bilayer; that stretch reads LLKNPTFILLCLAGATEATLIT. The Extracellular segment spans residues 401-420; the sequence is GMSTFSPKFLESQFSLSASE. The chain crosses the membrane as a helical span at residues 421–444; sequence AATLFGYLVVPAGGGGTFLGGFFV. The Cytoplasmic portion of the chain corresponds to 445–448; the sequence is NKLR. Residues 449–471 form a helical membrane-spanning segment; the sequence is LRGSAVIKFCLFCTVVSLLGILV. Residues 472-580 are Extracellular-facing; the sequence is FSLHCPSVPM…TSTCQRKPLL (109 aa). The Kazal-like domain occupies 498–555; it reads LNLTAPCNAACSCQPEHYSPVCGSDGLMYFSLCHAGCPAATETNVDGQKVYRDCSCIP. Residue asparagine 499 is glycosylated (N-linked (GlcNAc...) asparagine). 3 cysteine pairs are disulfide-bonded: cysteine 504-cysteine 534, cysteine 510-cysteine 530, and cysteine 519-cysteine 553. N-linked (GlcNAc...) asparagine glycosylation is present at asparagine 557. The helical transmembrane segment at 581-603 threads the bilayer; the sequence is LVFIFVVIFFTFLSSIPALTATL. Topologically, residues 604-612 are cytoplasmic; it reads RCVRDPQRS. A helical transmembrane segment spans residues 613-638; it reads FALGIQWIVVRILGGIPGPIAFGWVI. Residues 639–671 lie on the Extracellular side of the membrane; sequence DKACLLWQDQCGQQGSCLVYQNSAMSRYILIMG. The helical transmembrane segment at 672–689 threads the bilayer; it reads LLYKVLGVLFFAIACFLY. Topologically, residues 690 to 722 are cytoplasmic; that stretch reads KPLSESSDGLETCLPSQSSAPDSATDSQLQSSV. Positions 703 to 722 are disordered; it reads LPSQSSAPDSATDSQLQSSV.

Belongs to the organo anion transporter (TC 2.A.60) family. In terms of tissue distribution, widely expressed. Expressed in placental trophoblasts. Expressed in pancreas, kidney, skeletal muscle, liver, lung, brain, heart, colon, small intestine, ovary, testis, prostate, thymus and spleen. In testis, primarily localized to Leydig cells.

The protein resides in the cell membrane. The enzyme catalyses 3,3',5-triiodo-L-thyronine(out) + L-glutamate(in) = 3,3',5-triiodo-L-thyronine(in) + L-glutamate(out). It carries out the reaction L-thyroxine(out) + L-glutamate(in) = L-thyroxine(in) + L-glutamate(out). The catalysed reaction is estrone 3-sulfate(out) + L-glutamate(in) = estrone 3-sulfate(in) + L-glutamate(out). It catalyses the reaction taurocholate(out) + L-glutamate(in) = taurocholate(in) + L-glutamate(out). The enzyme catalyses 3,3',5-triiodo-L-thyronine(out) = 3,3',5-triiodo-L-thyronine(in). It carries out the reaction L-thyroxine(out) = L-thyroxine(in). The catalysed reaction is 3,3',5'-triiodo-L-thyronine(out) = 3,3',5'-triiodo-L-thyronine(in). It catalyses the reaction estrone 3-sulfate(out) = estrone 3-sulfate(in). The enzyme catalyses 17beta-estradiol 17-O-(beta-D-glucuronate)(out) = 17beta-estradiol 17-O-(beta-D-glucuronate)(in). It carries out the reaction taurocholate(out) = taurocholate(in). The catalysed reaction is prostaglandin E2(out) = prostaglandin E2(in). Its function is as follows. Organic anion antiporter with apparent broad substrate specificity. Recognizes various substrates including thyroid hormones 3,3',5-triiodo-L-thyronine (T3), L-thyroxine (T4) and 3,3',5'-triiodo-L-thyronine (rT3), conjugated steroids such as estrone 3-sulfate and estradiol 17-beta glucuronide, bile acids such as taurocholate and prostanoids such as prostaglandin E2, likely operating in a tissue-specific manner. May be involved in uptake of metabolites from the circulation into organs such as kidney, liver or placenta. Possibly drives the selective transport of thyroid hormones and estrogens coupled to an outward glutamate gradient across the microvillous membrane of the placenta. The transport mechanism, its electrogenicity and potential tissue-specific counterions remain to be elucidated. The polypeptide is Solute carrier organic anion transporter family member 4A1 (SLCO4A1) (Homo sapiens (Human)).